The following is a 331-amino-acid chain: Tetraacyldisaccharide 4'-kinase (331 aa).

55-62 (SVGGNGKT) contributes to the ATP binding site.

Belongs to the LpxK family.

The enzyme catalyses a lipid A disaccharide + ATP = a lipid IVA + ADP + H(+). It participates in glycolipid biosynthesis; lipid IV(A) biosynthesis; lipid IV(A) from (3R)-3-hydroxytetradecanoyl-[acyl-carrier-protein] and UDP-N-acetyl-alpha-D-glucosamine: step 6/6. Transfers the gamma-phosphate of ATP to the 4'-position of a tetraacyldisaccharide 1-phosphate intermediate (termed DS-1-P) to form tetraacyldisaccharide 1,4'-bis-phosphate (lipid IVA). The polypeptide is Tetraacyldisaccharide 4'-kinase (Aeromonas salmonicida (strain A449)).